The following is a 122-amino-acid chain: Flagellar hook-basal body complex protein FliE (122 aa).

This sequence belongs to the FliE family.

It localises to the bacterial flagellum basal body. The protein is Flagellar hook-basal body complex protein FliE of Marinobacter nauticus (strain ATCC 700491 / DSM 11845 / VT8) (Marinobacter aquaeolei).